Here is a 706-residue protein sequence, read N- to C-terminus: Transmembrane 9 superfamily member 3 (706 aa).

The N-terminal stretch at 1-33 (MRVRPKRSVITLMAIVVVMLILRNQFYSSRTRG) is a signal peptide. At 34-290 (HGQEPVISSS…LSDEQSIQFH (257 aa)) the chain is on the lumenal side. Residues 291-311 (WMSLANSVGIVLSISFITLII) traverse the membrane as a helical segment. At 312-371 (YVRVMYTDKSNSKSPKYMINIEGIETEDDLDDDKYGKYSVYTVAKDWIQNGRPNLFGLKV) the chain is on the cytoplasmic side. A helical transmembrane segment spans residues 372–392 (LILLVSFGVQFLFTIIGSLTI). The Lumenal segment spans residues 393–405 (SCSMNKLHNVRNS). Residues 406–426 (VLTMAILFFVLGAFMASFVGT) traverse the membrane as a helical segment. Residues 427–456 (RLSMVTKTKRTKANYLDDNRYLKDYKKFSP) are Cytoplasmic-facing. A helical transmembrane segment spans residues 457-477 (IFTILCGSSLPGIVMVSTFLL). Residues 478 to 494 (NSIVWAHDSTSALPFKT) lie on the Lumenal side of the membrane. A helical transmembrane segment spans residues 495–515 (IVFFMSIYFIVCIPLSLFGGI). Over 516–553 (VANNIPLPQYWLSGITKDESNSDGNGLFVPKSRAKFNP) the chain is Cytoplasmic. Residues 554–574 (LVYCGIYLCGIFPLLVIYVEM) traverse the membrane as a helical segment. Residues 575-592 (QYVYKSLWLEKTTFYYFY) are Lumenal-facing. Residues 593-613 (GFLFLSIILLCVLTMEISIIG) form a helical membrane-spanning segment. Residues 614-637 (SYLLMRFCFEDKVVRNNWRWKCFE) are Cytoplasmic-facing. A helical transmembrane segment spans residues 638-658 (MGFSGGVYMELYSLYYIFAVL). At 659-665 (NIHGFSS) the chain is on the lumenal side. Residues 666–686 (ILISICYSLIFNVMCSLGLGA) traverse the membrane as a helical segment. The Cytoplasmic segment spans residues 687–706 (LSYLTASWFINKIYHQKVNL).

It belongs to the nonaspanin (TM9SF) (TC 9.A.2) family.

It is found in the golgi apparatus membrane. In terms of biological role, with EMP70 and TMN2, plays a critical role in the late stages of a nutrient-controlled pathway notably regulating FLO11 gene expression. Acts downstream of RAS2 and TOR. Essential for cell adhesion and filamentous growth. May play a role as effector of cellular copper homeostasis. The sequence is that of Transmembrane 9 superfamily member 3 (TMN3) from Saccharomyces cerevisiae (strain ATCC 204508 / S288c) (Baker's yeast).